A 1100-amino-acid polypeptide reads, in one-letter code: DNA-directed RNA polymerase subunit beta (1100 aa).

Residues 1064 to 1100 (YEEDKEVDLMADVNQRRTPSRPTYESMSVGDIDDDDD) are disordered. Positions 1079 to 1089 (RRTPSRPTYES) are enriched in polar residues.

Belongs to the RNA polymerase beta chain family. As to quaternary structure, in cyanobacteria the RNAP catalytic core is composed of 2 alpha, 1 beta, 1 beta', 1 gamma and 1 omega subunit. When a sigma factor is associated with the core the holoenzyme is formed, which can initiate transcription.

The enzyme catalyses RNA(n) + a ribonucleoside 5'-triphosphate = RNA(n+1) + diphosphate. In terms of biological role, DNA-dependent RNA polymerase catalyzes the transcription of DNA into RNA using the four ribonucleoside triphosphates as substrates. The protein is DNA-directed RNA polymerase subunit beta of Synechococcus sp. (strain ATCC 27144 / PCC 6301 / SAUG 1402/1) (Anacystis nidulans).